We begin with the raw amino-acid sequence, 278 residues long: 4-diphosphocytidyl-2-C-methyl-D-erythritol kinase (278 aa).

Lys9 is an active-site residue. 89–99 (PVASGIGGGSA) is an ATP binding site. Asp128 is a catalytic residue.

It belongs to the GHMP kinase family. IspE subfamily.

The enzyme catalyses 4-CDP-2-C-methyl-D-erythritol + ATP = 4-CDP-2-C-methyl-D-erythritol 2-phosphate + ADP + H(+). It participates in isoprenoid biosynthesis; isopentenyl diphosphate biosynthesis via DXP pathway; isopentenyl diphosphate from 1-deoxy-D-xylulose 5-phosphate: step 3/6. Functionally, catalyzes the phosphorylation of the position 2 hydroxy group of 4-diphosphocytidyl-2C-methyl-D-erythritol. The polypeptide is 4-diphosphocytidyl-2-C-methyl-D-erythritol kinase (Cereibacter sphaeroides (strain ATCC 17025 / ATH 2.4.3) (Rhodobacter sphaeroides)).